A 416-amino-acid chain; its full sequence is Serine hydroxymethyltransferase (416 aa).

(6S)-5,6,7,8-tetrahydrofolate-binding positions include L121 and 125 to 127 (GHL). An N6-(pyridoxal phosphate)lysine modification is found at K229.

It belongs to the SHMT family. In terms of assembly, homodimer. The cofactor is pyridoxal 5'-phosphate.

The protein resides in the cytoplasm. The catalysed reaction is (6R)-5,10-methylene-5,6,7,8-tetrahydrofolate + glycine + H2O = (6S)-5,6,7,8-tetrahydrofolate + L-serine. It participates in one-carbon metabolism; tetrahydrofolate interconversion. Its pathway is amino-acid biosynthesis; glycine biosynthesis; glycine from L-serine: step 1/1. Its function is as follows. Catalyzes the reversible interconversion of serine and glycine with tetrahydrofolate (THF) serving as the one-carbon carrier. This reaction serves as the major source of one-carbon groups required for the biosynthesis of purines, thymidylate, methionine, and other important biomolecules. Also exhibits THF-independent aldolase activity toward beta-hydroxyamino acids, producing glycine and aldehydes, via a retro-aldol mechanism. The protein is Serine hydroxymethyltransferase of Azoarcus sp. (strain BH72).